Reading from the N-terminus, the 113-residue chain is Large ribosomal subunit protein uL22 (113 aa).

Belongs to the universal ribosomal protein uL22 family. As to quaternary structure, part of the 50S ribosomal subunit.

Functionally, this protein binds specifically to 23S rRNA; its binding is stimulated by other ribosomal proteins, e.g. L4, L17, and L20. It is important during the early stages of 50S assembly. It makes multiple contacts with different domains of the 23S rRNA in the assembled 50S subunit and ribosome. The globular domain of the protein is located near the polypeptide exit tunnel on the outside of the subunit, while an extended beta-hairpin is found that lines the wall of the exit tunnel in the center of the 70S ribosome. In Stenotrophomonas maltophilia (strain K279a), this protein is Large ribosomal subunit protein uL22.